Reading from the N-terminus, the 51-residue chain is DNA-directed RNA polymerases II, IV and V subunit 12 (51 aa).

Positions 12, 15, 29, and 32 each coordinate Zn(2+).

Belongs to the archaeal Rpo12/eukaryotic RPC10 RNA polymerase subunit family. In terms of assembly, component of the RNA polymerase II, IV and V complexes. Associates with the mediator complex. Interacts with NRPD1.

Its subcellular location is the nucleus. In terms of biological role, DNA-dependent RNA polymerase catalyzes the transcription of DNA into RNA using the four ribonucleoside triphosphates as substrates. Component of RNA polymerase II which synthesizes mRNA precursors and many functional non-coding RNAs. Pol II is the central component of the basal RNA polymerase II transcription machinery. It is composed of mobile elements that move relative to each other. Component of RNA polymerases IV and V which mediate short-interfering RNAs (siRNA) accumulation and subsequent RNA-directed DNA methylation-dependent (RdDM) transcriptional gene silencing (TGS) of endogenous repeated sequences, including transposable elements. This is DNA-directed RNA polymerases II, IV and V subunit 12 (NRPB12) from Arabidopsis thaliana (Mouse-ear cress).